Consider the following 396-residue polypeptide: MVKKVVSDLELKDKKVLVRADFNVPMKDGNITNDNRIVEALPTIKYIIEQGGKVILFSHLGKVKTEEDKANLSLQPVANRLSELLDKEVQFVAETRGEKLESAINALQPGDVLLFENTRFEDVDGKKESKNDAELGKYWASLGDVFVNDAFGTAHREHASNVGVATHLDTAAGFLMEKEIKFIGGVVENPERPFVAILGGAKVSDKIGVIENLLEVADKVLIGGGMAYTFLKAQGKEIGHSLLEEDKIDLAKDLMERGKDKLVLPIDAKVTKEFSNDGEIEAVAIDHIPADLQSLDIGPKTVELFGKELEGAKTVVWNGPMGVFEMSNFAKGTVGVCKAIAELKGATTIIGGGDSAAAAMDLGFADKFTHISTGGGASLEYLEGKELPGIKSISDK.

Substrate contacts are provided by residues 21 to 23 (DFN), Arg-36, 59 to 62 (HLGK), Arg-119, and Arg-156. Residues Lys-206, Glu-325, and 352–355 (GGDS) contribute to the ATP site.

This sequence belongs to the phosphoglycerate kinase family. In terms of assembly, monomer.

The protein resides in the cytoplasm. It carries out the reaction (2R)-3-phosphoglycerate + ATP = (2R)-3-phospho-glyceroyl phosphate + ADP. Its pathway is carbohydrate degradation; glycolysis; pyruvate from D-glyceraldehyde 3-phosphate: step 2/5. The chain is Phosphoglycerate kinase from Macrococcus caseolyticus (strain JCSC5402) (Macrococcoides caseolyticum).